The chain runs to 132 residues: Neurophysin 2 (132 aa).

Intrachain disulfides connect Cys-10–Cys-54, Cys-13–Cys-27, Cys-21–Cys-44, Cys-28–Cys-34, Cys-61–Cys-73, Cys-67–Cys-85, and Cys-74–Cys-79.

This sequence belongs to the vasopressin/oxytocin family.

It is found in the secreted. Neurophysin 2 specifically binds vasopressin. The polypeptide is Neurophysin 2 (Struthio camelus (Common ostrich)).